The sequence spans 427 residues: Adenylosuccinate synthetase (427 aa).

GTP contacts are provided by residues 12–18 (GDEGKGK) and 40–42 (GHT). Residue aspartate 13 is the Proton acceptor of the active site. Mg(2+) is bound by residues aspartate 13 and glycine 40. IMP is bound by residues 13-16 (DEGK), 38-41 (NAGH), threonine 128, arginine 142, glutamine 223, threonine 238, and arginine 302. Histidine 41 acts as the Proton donor in catalysis. 298–304 (TTTGRPR) serves as a coordination point for substrate. GTP contacts are provided by residues arginine 304, 330–332 (SID), and 412–414 (SVG).

This sequence belongs to the adenylosuccinate synthetase family. Homodimer. The cofactor is Mg(2+).

The protein localises to the cytoplasm. The catalysed reaction is IMP + L-aspartate + GTP = N(6)-(1,2-dicarboxyethyl)-AMP + GDP + phosphate + 2 H(+). It functions in the pathway purine metabolism; AMP biosynthesis via de novo pathway; AMP from IMP: step 1/2. Its function is as follows. Plays an important role in the de novo pathway of purine nucleotide biosynthesis. Catalyzes the first committed step in the biosynthesis of AMP from IMP. The polypeptide is Adenylosuccinate synthetase (Staphylococcus aureus (strain MW2)).